A 455-amino-acid polypeptide reads, in one-letter code: Na(+)/H(+) antiporter NhaA (455 aa).

11 consecutive transmembrane segments (helical) span residues 31-51 (ASGI…NSPW), 83-103 (GLMS…VLIG), 113-133 (FPLI…LLCV), 141-161 (GWGI…ILLG), 170-190 (VFVT…IALF), 198-218 (VSLL…LLGI), 231-251 (IWAA…LLAF), 309-329 (GLQP…NAGV), 345-365 (IGVA…FAWL), 383-403 (IFGA…IASL), and 414-434 (SKIG…VVLW).

Belongs to the NhaA Na(+)/H(+) (TC 2.A.33) antiporter family.

It localises to the cell inner membrane. It carries out the reaction Na(+)(in) + 2 H(+)(out) = Na(+)(out) + 2 H(+)(in). Its function is as follows. Na(+)/H(+) antiporter that extrudes sodium in exchange for external protons. This is Na(+)/H(+) antiporter NhaA from Koribacter versatilis (strain Ellin345).